The primary structure comprises 715 residues: Fatty acid oxidation complex subunit alpha (715 aa).

The interval 1–190 (MTTTSAFMLN…KAGLVDDVVP (190 aa)) is enoyl-CoA hydratase. Positions 306 to 715 (GPLNSVGILG…WTNGETDQGN (410 aa)) are 3-hydroxyacyl-CoA dehydrogenase.

This sequence in the N-terminal section; belongs to the enoyl-CoA hydratase/isomerase family. The protein in the central section; belongs to the 3-hydroxyacyl-CoA dehydrogenase family. Heterotetramer of two alpha chains (FadJ) and two beta chains (FadI).

The protein resides in the cytoplasm. It catalyses the reaction a (3S)-3-hydroxyacyl-CoA = a (2E)-enoyl-CoA + H2O. The catalysed reaction is a 4-saturated-(3S)-3-hydroxyacyl-CoA = a (3E)-enoyl-CoA + H2O. The enzyme catalyses a (3S)-3-hydroxyacyl-CoA + NAD(+) = a 3-oxoacyl-CoA + NADH + H(+). It carries out the reaction (3S)-3-hydroxybutanoyl-CoA = (3R)-3-hydroxybutanoyl-CoA. The protein operates within lipid metabolism; fatty acid beta-oxidation. In terms of biological role, catalyzes the formation of a hydroxyacyl-CoA by addition of water on enoyl-CoA. Also exhibits 3-hydroxyacyl-CoA epimerase and 3-hydroxyacyl-CoA dehydrogenase activities. In Salmonella agona (strain SL483), this protein is Fatty acid oxidation complex subunit alpha.